The primary structure comprises 111 residues: Putative membrane protein insertion efficiency factor (111 aa).

Belongs to the UPF0161 family.

Its subcellular location is the cell inner membrane. Its function is as follows. Could be involved in insertion of integral membrane proteins into the membrane. This chain is Putative membrane protein insertion efficiency factor, found in Methylobacterium nodulans (strain LMG 21967 / CNCM I-2342 / ORS 2060).